We begin with the raw amino-acid sequence, 460 residues long: Chromosomal replication initiator protein DnaA (460 aa).

Residues 1–84 are domain I, interacts with DnaA modulators; the sequence is MAVSLWQQCI…RFDIGSRPSA (84 aa). The tract at residues 84–123 is domain II; the sequence is AKKPEPAPVAAVRVPNPQTKASVGTSFNTTEPVVNANHRS. Positions 124–340 are domain III, AAA+ region; sequence NINPTYQFDN…GALNRVIANA (217 aa). Residues Gly168, Gly170, Lys171, and Thr172 each coordinate ATP. Positions 341-460 are domain IV, binds dsDNA; sequence NFTGRPITID…YANLIRTLSS (120 aa).

The protein belongs to the DnaA family. In terms of assembly, oligomerizes as a right-handed, spiral filament on DNA at oriC.

Its subcellular location is the cytoplasm. Functionally, plays an essential role in the initiation and regulation of chromosomal replication. ATP-DnaA binds to the origin of replication (oriC) to initiate formation of the DNA replication initiation complex once per cell cycle. Binds the DnaA box (a 9 base pair repeat at the origin) and separates the double-stranded (ds)DNA. Forms a right-handed helical filament on oriC DNA; dsDNA binds to the exterior of the filament while single-stranded (ss)DNA is stabiized in the filament's interior. The ATP-DnaA-oriC complex binds and stabilizes one strand of the AT-rich DNA unwinding element (DUE), permitting loading of DNA polymerase. After initiation quickly degrades to an ADP-DnaA complex that is not apt for DNA replication. Binds acidic phospholipids. The protein is Chromosomal replication initiator protein DnaA of Shewanella sp. (strain MR-7).